The following is a 374-amino-acid chain: Anhydro-N-acetylmuramic acid kinase (374 aa).

G12–D19 provides a ligand contact to ATP.

This sequence belongs to the anhydro-N-acetylmuramic acid kinase family.

It catalyses the reaction 1,6-anhydro-N-acetyl-beta-muramate + ATP + H2O = N-acetyl-D-muramate 6-phosphate + ADP + H(+). It functions in the pathway amino-sugar metabolism; 1,6-anhydro-N-acetylmuramate degradation. Its pathway is cell wall biogenesis; peptidoglycan recycling. In terms of biological role, catalyzes the specific phosphorylation of 1,6-anhydro-N-acetylmuramic acid (anhMurNAc) with the simultaneous cleavage of the 1,6-anhydro ring, generating MurNAc-6-P. Is required for the utilization of anhMurNAc either imported from the medium or derived from its own cell wall murein, and thus plays a role in cell wall recycling. The chain is Anhydro-N-acetylmuramic acid kinase from Sodalis glossinidius (strain morsitans).